The following is a 42-amino-acid chain: MESIFLHTNITIIPHSVLYVSLSYYIINPCTSASSNFDDSFS.

Residues 5–27 form a helical membrane-spanning segment; sequence FLHTNITIIPHSVLYVSLSYYII.

It is found in the membrane. This is an uncharacterized protein from Saccharomyces cerevisiae (strain ATCC 204508 / S288c) (Baker's yeast).